Reading from the N-terminus, the 332-residue chain is MSKNGAADALKTFELENNIQTIDHDQLFKYDPQQYQQFLQSKPWSKDPHYFKHVKISAIALLKMVMHARSGGKLEVMGMLMGKVENNTMIIMDSFALPVEGTETRVNAQVEAYEYMVEYLELIKQTGRLENALGWYHSHPGYGCWLSGIDVGTQSVNQQYSEPWLGIVIDPTRTVSAGKVEIGAFRTYPQGYKPPNEGPSEYQSIPLSKIEDFGVHCKQYYSLEITYFKSSLDQQLLDKLWNKYWVNTLSSSPIFSNRDYITGQINDLSEKLEQAETQLSHSRSSILDKKKEESLLSKVSKDSSKVTIEQVQGIMSQVFKNSIFNECQTTKQ.

The 138-residue stretch at 54-191 (VKISAIALLK…IGAFRTYPQG (138 aa)) folds into the MPN domain. 3 residues coordinate Zn(2+): His-137, His-139, and Asp-150. A JAMM motif motif is present at residues 137-150 (HSHPGYGCWLSGID).

This sequence belongs to the peptidase M67A family. CSN5 subfamily. In terms of assembly, component of the CSN complex. The holocomplex is comprised of 8 subunits csn1-8. In the complex, it probably interacts directly with csn1, csn2, csn3, csn4, csn6 and csn8. The cofactor is a divalent metal cation.

The protein localises to the cytoplasm. It localises to the nucleus. In terms of biological role, probable protease subunit of the COP9 signalosome complex (CSN), a complex involved in various cellular and developmental processes. The CSN complex is an essential regulator of the ubiquitin (Ubl) conjugation pathway by mediating the deneddylation of the cullin subunits of E3 ligasew complexes, leading to modify the Ubl ligase activity. In the complex, it probably acts as the catalytic center that mediates the cleavage of Nedd8 from cullins. Csn5 is essential for growth or survival. The polypeptide is COP9 signalosome complex subunit 5 (csn5) (Dictyostelium discoideum (Social amoeba)).